Reading from the N-terminus, the 376-residue chain is tRNA-specific 2-thiouridylase MnmA (376 aa).

ATP-binding positions include 14–21 (GMSGGVDS) and M40. The interval 100–102 (NPD) is interaction with target base in tRNA. C105 acts as the Nucleophile in catalysis. A disulfide bridge connects residues C105 and C202. G129 is a binding site for ATP. Positions 152 to 154 (KDQ) are interaction with tRNA. The active-site Cysteine persulfide intermediate is C202. Residues 315–316 (RY) are interaction with tRNA.

This sequence belongs to the MnmA/TRMU family.

The protein resides in the cytoplasm. The catalysed reaction is S-sulfanyl-L-cysteinyl-[protein] + uridine(34) in tRNA + AH2 + ATP = 2-thiouridine(34) in tRNA + L-cysteinyl-[protein] + A + AMP + diphosphate + H(+). Catalyzes the 2-thiolation of uridine at the wobble position (U34) of tRNA, leading to the formation of s(2)U34. This chain is tRNA-specific 2-thiouridylase MnmA, found in Lactococcus lactis subsp. cremoris (strain MG1363).